The primary structure comprises 376 residues: Carbapenem antibiotics biosynthesis protein CarD (376 aa).

Belongs to the proline oxidase family.

The protein operates within antibiotic biosynthesis; carbapenem biosynthesis. This Pectobacterium carotovorum subsp. carotovorum (Erwinia carotovora subsp. carotovora) protein is Carbapenem antibiotics biosynthesis protein CarD (carD).